We begin with the raw amino-acid sequence, 452 residues long: Type II methyltransferase M.EcaI (452 aa).

This sequence belongs to the N(4)/N(6)-methyltransferase family.

It carries out the reaction a 2'-deoxyadenosine in DNA + S-adenosyl-L-methionine = an N(6)-methyl-2'-deoxyadenosine in DNA + S-adenosyl-L-homocysteine + H(+). A beta subtype methylase, recognizes the double-stranded sequence 5'-GGTNACC-3', methylates A-5 on both strands and protects the DNA from cleavage by the EcaI endonuclease. This is Type II methyltransferase M.EcaI (ecaIM) from Enterobacter cloacae.